A 129-amino-acid chain; its full sequence is Serum amyloid A-2 protein (129 aa).

Residues 1-18 (MKLFTGLIFCSLVLGVSS) form the signal peptide. At Q19 the chain carries Pyrrolidone carboxylic acid. A disordered region spans residues 92–129 (GDSGHGVEDSKADQAANEWGRSGKDPNHFRPSGLPDKY).

Belongs to the SAA family. In terms of assembly, apolipoprotein of the HDL complex. In terms of tissue distribution, expressed by the liver; secreted in plasma.

It localises to the secreted. Functionally, major acute phase reactant. This chain is Serum amyloid A-2 protein (SAA2P0DJI9), found in Neovison vison (American mink).